Reading from the N-terminus, the 353-residue chain is MTLLTETLSNIRPVDAGLMAQAQARLDNKTKPIGSLGRLEEFARRTVAISGSLDPSTAKKAIFTFAADHGVVEEGVSAFPKEVTVQMVFNFLKGGAGINVLANHVGADVLVVDMGIDHDFGDTPGLIDRKVARGTRNMAKGPAMTREEAVTALEAGIELACGCKADGVAMAGTGEMGIGNTTAASAIIAAFSGKTVADVTHRGTGINDAALAKKVTIIEQALAVNRPDPKDPIDVLAKVGGLEIAGIAGLVLGCAANRIPVVVDGFISTAGALIACELCPTVKEYIFAAHESVEIGHRFMLERIGAEPILDLHLRLGEGTGAALAMGLIEAGVKILKEMATFAEAGVEKGRDQ.

The active-site Proton acceptor is glutamate 318.

It belongs to the CobT family.

It carries out the reaction 5,6-dimethylbenzimidazole + nicotinate beta-D-ribonucleotide = alpha-ribazole 5'-phosphate + nicotinate + H(+). It functions in the pathway nucleoside biosynthesis; alpha-ribazole biosynthesis; alpha-ribazole from 5,6-dimethylbenzimidazole: step 1/2. Catalyzes the synthesis of alpha-ribazole-5'-phosphate from nicotinate mononucleotide (NAMN) and 5,6-dimethylbenzimidazole (DMB). This chain is Nicotinate-nucleotide--dimethylbenzimidazole phosphoribosyltransferase, found in Geobacter metallireducens (strain ATCC 53774 / DSM 7210 / GS-15).